A 413-amino-acid chain; its full sequence is Synaptosomal-associated protein 47 (413 aa).

Residues 109 to 171 (AANIPSHVTR…DVADRLLTEL (63 aa)) enclose the t-SNARE coiled-coil homology 1 domain. The disordered stretch occupies residues 321-342 (RHAASRPKGCTPHRELPTGGQE). The t-SNARE coiled-coil homology 2 domain maps to 350–412 (KNLPLFSEGE…DKQNRRMRKL (63 aa)).

This sequence belongs to the SVAP1 family. As to quaternary structure, associates with the BLOC-1 complex. Interacts with BLOC1S6. Forms a complex containing SNAP47, VAMP2 and STX1A. Ubiquitously expressed with the most abundant expression in the brain. In brain, most highly expressed in the glomerular layer of the olfactory bulb, the cortex, striatum, hippocampus, and colliculi (at protein level).

The protein localises to the endomembrane system. Its subcellular location is the cytoplasm. It localises to the perinuclear region. Functionally, may play a role in intracellular membrane fusion. This is Synaptosomal-associated protein 47 (Snap47) from Mus musculus (Mouse).